Reading from the N-terminus, the 419-residue chain is GTPase Obg (419 aa).

Positions 1 to 156 (MFIDKVNTYL…AEVNLELRLI (156 aa)) constitute an Obg domain. Positions 157–325 (ADVGLLGLPN…LLKEMLRMLE (169 aa)) constitute an OBG-type G domain. GTP-binding positions include 163–170 (GLPNAGKS), 188–192 (FTTLA), 209–212 (DIPG), 279–282 (NKID), and 306–308 (SAA). Positions 170 and 190 each coordinate Mg(2+). In terms of domain architecture, OCT spans 342–419 (KKYIYEPEFK…IGDFEFTFEK (78 aa)).

Belongs to the TRAFAC class OBG-HflX-like GTPase superfamily. OBG GTPase family. In terms of assembly, monomer. Mg(2+) is required as a cofactor.

It is found in the cytoplasm. An essential GTPase which binds GTP, GDP and possibly (p)ppGpp with moderate affinity, with high nucleotide exchange rates and a fairly low GTP hydrolysis rate. Plays a role in control of the cell cycle, stress response, ribosome biogenesis and in those bacteria that undergo differentiation, in morphogenesis control. The protein is GTPase Obg of Endomicrobium trichonymphae.